The sequence spans 75 residues: Sec-independent protein translocase protein TatA (75 aa).

Residues 1 to 21 form a helical membrane-spanning segment; that stretch reads MGSFSIWHWLIVLVIVLLVFG. The disordered stretch occupies residues 41-75; that stretch reads KGMHDDDKPAGKLGDDSRSAEQAREAQAERDRDAR.

This sequence belongs to the TatA/E family. As to quaternary structure, the Tat system comprises two distinct complexes: a TatABC complex, containing multiple copies of TatA, TatB and TatC subunits, and a separate TatA complex, containing only TatA subunits. Substrates initially bind to the TatABC complex, which probably triggers association of the separate TatA complex to form the active translocon.

It is found in the cell inner membrane. Part of the twin-arginine translocation (Tat) system that transports large folded proteins containing a characteristic twin-arginine motif in their signal peptide across membranes. TatA could form the protein-conducting channel of the Tat system. The sequence is that of Sec-independent protein translocase protein TatA from Xanthomonas campestris pv. campestris (strain 8004).